We begin with the raw amino-acid sequence, 496 residues long: Nectin 1a (496 aa).

An N-terminal signal peptide occupies residues 1–20 (MMFINLLLRLMCVFLIGADG). Residues 21–349 (QMVQMESSKA…FQDQQQAGVV (329 aa)) lie on the Extracellular side of the membrane. The Ig-like V-type domain maps to 34–138 (GSQVELPCQF…GNRENMVNLT (105 aa)). A disulfide bridge links cysteine 41 with cysteine 121. Residues asparagine 62 and asparagine 136 are each glycosylated (N-linked (GlcNAc...) asparagine). 2 Ig-like C2-type domains span residues 143–238 (PMIQ…VTLN) and 243–330 (PEVI…VIVT). Disulfide bonds link cysteine 168/cysteine 222 and cysteine 265/cysteine 312. N-linked (GlcNAc...) asparagine glycosylation occurs at asparagine 282. Residues 350–370 (IGGAVVCGTVLLAAVTLLVVF) traverse the membrane as a helical segment. Residues 371-496 (LYRRRCMFKG…SVISKEEWYV (126 aa)) are Cytoplasmic-facing.

It belongs to the nectin family. As to quaternary structure, cis- and trans-homodimer. Can form trans-heterodimers. In terms of tissue distribution, expressed in the developing eye and nervous system.

The protein localises to the cell membrane. The protein resides in the cell junction. Its subcellular location is the adherens junction. Cell adhesion molecule that promotes cell-cell contacts and plays important roles in the development of the nervous system. Acts by forming homophilic or heterophilic trans-dimers. This is Nectin 1a from Danio rerio (Zebrafish).